The chain runs to 346 residues: Holliday junction branch migration complex subunit RuvB (346 aa).

A large ATPase domain (RuvB-L) region spans residues methionine 1–tyrosine 182. ATP contacts are provided by residues isoleucine 21, arginine 22, glycine 63, lysine 66, threonine 67, threonine 68, glutamate 129–phenylalanine 131, arginine 172, tyrosine 182, and arginine 219. Threonine 67 provides a ligand contact to Mg(2+). The tract at residues serine 183–aspartate 253 is small ATPAse domain (RuvB-S). Positions glutamate 256 to serine 346 are head domain (RuvB-H). DNA contacts are provided by arginine 311 and arginine 316.

Belongs to the RuvB family. Homohexamer. Forms an RuvA(8)-RuvB(12)-Holliday junction (HJ) complex. HJ DNA is sandwiched between 2 RuvA tetramers; dsDNA enters through RuvA and exits via RuvB. An RuvB hexamer assembles on each DNA strand where it exits the tetramer. Each RuvB hexamer is contacted by two RuvA subunits (via domain III) on 2 adjacent RuvB subunits; this complex drives branch migration. In the full resolvosome a probable DNA-RuvA(4)-RuvB(12)-RuvC(2) complex forms which resolves the HJ.

The protein localises to the cytoplasm. It catalyses the reaction ATP + H2O = ADP + phosphate + H(+). In terms of biological role, the RuvA-RuvB-RuvC complex processes Holliday junction (HJ) DNA during genetic recombination and DNA repair, while the RuvA-RuvB complex plays an important role in the rescue of blocked DNA replication forks via replication fork reversal (RFR). RuvA specifically binds to HJ cruciform DNA, conferring on it an open structure. The RuvB hexamer acts as an ATP-dependent pump, pulling dsDNA into and through the RuvAB complex. RuvB forms 2 homohexamers on either side of HJ DNA bound by 1 or 2 RuvA tetramers; 4 subunits per hexamer contact DNA at a time. Coordinated motions by a converter formed by DNA-disengaged RuvB subunits stimulates ATP hydrolysis and nucleotide exchange. Immobilization of the converter enables RuvB to convert the ATP-contained energy into a lever motion, pulling 2 nucleotides of DNA out of the RuvA tetramer per ATP hydrolyzed, thus driving DNA branch migration. The RuvB motors rotate together with the DNA substrate, which together with the progressing nucleotide cycle form the mechanistic basis for DNA recombination by continuous HJ branch migration. Branch migration allows RuvC to scan DNA until it finds its consensus sequence, where it cleaves and resolves cruciform DNA. In Chlorobium phaeovibrioides (strain DSM 265 / 1930) (Prosthecochloris vibrioformis (strain DSM 265)), this protein is Holliday junction branch migration complex subunit RuvB.